We begin with the raw amino-acid sequence, 248 residues long: Probable transcriptional regulator LumQ (248 aa).

In terms of domain architecture, HTH araC/xylS-type spans 148 to 246; the sequence is VLIDNYIEQH…GMSPTRYQFF (99 aa). DNA-binding regions (H-T-H motif) lie at residues 165 to 186 and 213 to 236; these read AELS…KSQM and LSQV…RRLY.

Probable transcriptional regulator. Its target gene(s) is not yet known. This is Probable transcriptional regulator LumQ (lumQ) from Photobacterium leiognathi.